We begin with the raw amino-acid sequence, 702 residues long: Phosphatase and actin regulator 4 (702 aa).

Disordered stretches follow at residues 1–38 (MEDPFEEADQPATEPGMVMDSVEAGDTTPPTKRKSKFS), 82–194 (GVLL…SSGG), and 222–363 (NLSV…PFPA). The stretch at 63 to 88 (EVLERKISMRKPREELVKRGVLLEDP) is one RPEL 1 repeat. Over residues 106–120 (GHTTPIGNARSSSPV) the composition is skewed to polar residues. Phosphoserine is present on residues S116, S118, S131, and S147. Residues 147-156 (STGSQPNSEA) are compositionally biased toward polar residues. Residues 163–173 (VPKPPLLPPKR) show a composition bias toward pro residues. Over residues 233–250 (TLPAAPASTNTTATPSLT) the composition is skewed to low complexity. Phosphoserine is present on residues S270 and S291. Residues 301-318 (PSTSVPTLESAAAITTKT) show a composition bias toward polar residues. Residues S342 and S344 each carry the phosphoserine modification. The segment covering 342–362 (SPSPPLPTHIPPEPPRTPPFP) has biased composition (pro residues). Position 358 is a phosphothreonine (T358). Position 427 is a phosphoserine (S427). T432 is subject to Phosphothreonine. 3 positions are modified to phosphoserine: S443, S453, and S464. Residues 473–536 (KVPDDEEEEE…EEDEDESYQS (64 aa)) are disordered. A compositionally biased stretch (low complexity) spans 486–497 (PSTFSEETTPTS). Acidic residues predominate over residues 508–518 (EEEEKESDSDS). 4 positions are modified to phosphoserine: S514, S516, S557, and S590. RPEL repeat units follow at residues 583–608 (NTLIRRLSQRPTPEELEQRNILQPKN) and 621–646 (RRLTRKLSQRPTVAELLARKILRFNE). Positions 592 to 615 (RPTPEELEQRNILQPKNEADRQAE) are disordered. At S628 the chain carries Phosphoserine.

Belongs to the phosphatase and actin regulator family. As to quaternary structure, binds PPP1CA and actin.

The protein resides in the cytoplasm. The protein localises to the cell projection. It is found in the lamellipodium. Its function is as follows. Regulator of protein phosphatase 1 (PP1) required for neural tube and optic fissure closure, and enteric neural crest cell (ENCCs) migration during development. Acts as an activator of PP1 by interacting with PPP1CA and preventing phosphorylation of PPP1CA at 'Thr-320'. During neural tube closure, localizes to the ventral neural tube and activates PP1, leading to down-regulate cell proliferation within cranial neural tissue and the neural retina. Also acts as a regulator of migration of enteric neural crest cells (ENCCs) by activating PP1, leading to dephosphorylation and subsequent activation of cofilin (COF1 or COF2) and repression of the integrin signaling through the RHO/ROCK pathway. This is Phosphatase and actin regulator 4 (PHACTR4) from Pongo abelii (Sumatran orangutan).